The following is a 190-amino-acid chain: UPF0340 protein BC_5317 (190 aa).

This sequence belongs to the UPF0340 family.

This chain is UPF0340 protein BC_5317, found in Bacillus cereus (strain ATCC 14579 / DSM 31 / CCUG 7414 / JCM 2152 / NBRC 15305 / NCIMB 9373 / NCTC 2599 / NRRL B-3711).